The chain runs to 307 residues: Small ribosomal subunit biogenesis GTPase RsgA (307 aa).

Positions 1-21 (MPSEHPFSDGISTPNPKETMN) are disordered. Residues 10–21 (GISTPNPKETMN) are compositionally biased toward polar residues. A CP-type G domain is found at 85-242 (RQDAWKTKLI…LIDSPGLQEF (158 aa)). Residues 135 to 138 (NKAD) and 184 to 192 (GQSGMGKST) contribute to the GTP site. Positions 266, 271, 273, and 279 each coordinate Zn(2+).

This sequence belongs to the TRAFAC class YlqF/YawG GTPase family. RsgA subfamily. Monomer. Associates with 30S ribosomal subunit, binds 16S rRNA. Zn(2+) is required as a cofactor.

The protein localises to the cytoplasm. One of several proteins that assist in the late maturation steps of the functional core of the 30S ribosomal subunit. Helps release RbfA from mature subunits. May play a role in the assembly of ribosomal proteins into the subunit. Circularly permuted GTPase that catalyzes slow GTP hydrolysis, GTPase activity is stimulated by the 30S ribosomal subunit. The sequence is that of Small ribosomal subunit biogenesis GTPase RsgA from Neisseria gonorrhoeae (strain NCCP11945).